Reading from the N-terminus, the 279-residue chain is Bis(5'-nucleosyl)-tetraphosphatase, symmetrical (279 aa).

The protein belongs to the Ap4A hydrolase family.

It carries out the reaction P(1),P(4)-bis(5'-adenosyl) tetraphosphate + H2O = 2 ADP + 2 H(+). In terms of biological role, hydrolyzes diadenosine 5',5'''-P1,P4-tetraphosphate to yield ADP. The sequence is that of Bis(5'-nucleosyl)-tetraphosphatase, symmetrical from Edwardsiella ictaluri (strain 93-146).